The following is a 502-amino-acid chain: Polyadenylate-binding protein, cytoplasmic and nuclear (502 aa).

4 consecutive RRM domains span residues 14-90 (LTIY…KKDE), 96-176 (GNIF…LYNP), 191-275 (TNCF…KGQR), and 299-376 (KNLY…YFKN).

Belongs to the polyadenylate-binding protein type-1 family.

It localises to the cytoplasm. The protein localises to the nucleus. Functionally, binds the poly(A) tail of mRNA. Appears to be an important mediator of the multiple roles of the poly(A) tail in mRNA biogenesis, stability and translation. The polypeptide is Polyadenylate-binding protein, cytoplasmic and nuclear (PAB1) (Encephalitozoon cuniculi (strain GB-M1) (Microsporidian parasite)).